The following is a 118-amino-acid chain: Eukaryotic translation initiation factor 4E-binding protein 1 (118 aa).

The residue at position 2 (S2) is an N-acetylserine. The interval 27 to 48 is disordered; sequence VQLPPGDYSTTPGGTLFSTTPG. Residues 34–48 are compositionally biased toward polar residues; that stretch reads YSTTPGGTLFSTTPG. Position 37 is a phosphothreonine; by MTOR (T37). A Phosphothreonine modification is found at T41. The residue at position 44 (S44) is a Phosphoserine. The residue at position 46 (T46) is a Phosphothreonine; by MTOR. Position 50 is a phosphothreonine (T50). At Y54 the chain carries Phosphotyrosine. The YXXXXLphi motif motif lies at 54–60; the sequence is YDRKFLM. Residue K57 forms a Glycyl lysine isopeptide (Lys-Gly) (interchain with G-Cter in ubiquitin) linkage. The disordered stretch occupies residues 64–118; that stretch reads NSPVTKTPPRDLPTIPGVTSPTGDEPPTEARQNHLRSSPEDKPAGGEESQFEMDI. A Phosphoserine; by DYRK2, MAPK1, MAPK3 and MTOR modification is found at S65. T70 carries the post-translational modification Phosphothreonine; by MTOR. T77 carries the post-translational modification Phosphothreonine. Residues S83 and S100 each carry the phosphoserine modification. At S101 the chain carries Phosphoserine; by DYRK2. Phosphoserine is present on S112. A TOS motif motif is present at residues 114 to 118; that stretch reads FEMDI.

The protein belongs to the eIF4E-binding protein family. As to quaternary structure, hypophosphorylated EIF4EBP1 competes with EIF4G1/EIF4G3 to interact with EIF4E; insulin stimulated MAP-kinase (MAPK1 and MAPK3) or mTORC1 phosphorylation of EIF4EBP1 causes dissociation of the complex allowing EIF4G1/EIF4G3 to bind and consequent initiation of translation. Interacts (via TOS motif) with RPTOR; promoting phosphorylation by mTORC1. In terms of processing, phosphorylated on serine and threonine residues in response to insulin, EGF and PDGF. Phosphorylation at Thr-37, Thr-46, Ser-65 and Thr-70, corresponding to the hyperphosphorylated form, is regulated by mTORC1 and abolishes binding to EIF4E. Ubiquitinated: when eIF4E levels are low, hypophosphorylated form is ubiquitinated by the BCR(KLHL25) complex, leading to its degradation and serving as a homeostatic mechanism to maintain translation and prevent eIF4E inhibition when eIF4E levels are low. Not ubiquitinated when hyperphosphorylated (at Thr-37, Thr-46, Ser-65 and Thr-70) or associated with eIF4E.

The protein localises to the cytoplasm. It is found in the nucleus. Functionally, repressor of translation initiation that regulates EIF4E activity by preventing its assembly into the eIF4F complex: hypophosphorylated form competes with EIF4G1/EIF4G3 and strongly binds to EIF4E, leading to repress translation. In contrast, hyperphosphorylated form dissociates from EIF4E, allowing interaction between EIF4G1/EIF4G3 and EIF4E, leading to initiation of translation. Mediates the regulation of protein translation by hormones, growth factors and other stimuli that signal through the MAP kinase and mTORC1 pathways. The chain is Eukaryotic translation initiation factor 4E-binding protein 1 (EIF4EBP1) from Bos taurus (Bovine).